The sequence spans 496 residues: UDP-N-acetylmuramate--L-alanine ligase (496 aa).

122-128 is a binding site for ATP; it reads GTHGKTT.

It belongs to the MurCDEF family.

Its subcellular location is the cytoplasm. It carries out the reaction UDP-N-acetyl-alpha-D-muramate + L-alanine + ATP = UDP-N-acetyl-alpha-D-muramoyl-L-alanine + ADP + phosphate + H(+). It functions in the pathway cell wall biogenesis; peptidoglycan biosynthesis. Functionally, cell wall formation. This is UDP-N-acetylmuramate--L-alanine ligase from Mycobacterium avium (strain 104).